The primary structure comprises 502 residues: Probable cytochrome P450 313b1 (502 aa).

Cysteine 449 contributes to the heme binding site.

This sequence belongs to the cytochrome P450 family. Requires heme as cofactor.

Its subcellular location is the endoplasmic reticulum membrane. It is found in the microsome membrane. Its function is as follows. May be involved in the metabolism of insect hormones and in the breakdown of synthetic insecticides. This Drosophila melanogaster (Fruit fly) protein is Probable cytochrome P450 313b1 (Cyp313b1).